The chain runs to 354 residues: Tsukushi (354 aa).

An N-terminal signal peptide occupies residues 1 to 17 (MLCSLFLLLLAVGRVQT). The LRRNT domain occupies 18 to 59 (TRPCFPGCQCEEETFGLFDSFSLIRVDCSSLGPHIVPVPIPL). LRR repeat units lie at residues 60–81 (DTAH…VLAG), 86–107 (TLAG…AFSR), 110–131 (YLES…IFTS), 133–154 (PLSD…AFTT), 160–180 (ALHV…PARA), 186–207 (TIQS…RDLP), 208–228 (LRYL…AFMG), 231–253 (GLTH…GFRE), 256–277 (GLQV…EVFS), and 281–302 (LLQE…LLHH). Asn75 carries N-linked (GlcNAc...) asparagine glycosylation. Residue Asn138 is glycosylated (N-linked (GlcNAc...) asparagine). N-linked (GlcNAc...) asparagine glycosylation is present at Asn191.

In terms of assembly, interacts with FZD4 (via FZ domain); competes with WNT2B for binding to FZD4, inhibiting Wnt signaling and repressing peripheral eye development. Interacts with TGFB1; the interaction contributes to regulation of the hair cycle. Interacts with netrin. Interacts with CCN2. In terms of tissue distribution, expressed in macrophages in inflamed wounds with wound expression starting 2 days post-wounding (dpw) (at protein level). At 7 dpw, expressed from epidermis and extracellular matrix in the wound edge to neoepidermis and granulation tissue and in panniculus carnosus under the granulation tissue (at protein level). After fibrosis, disappears in the dermal area at 11 dpw (at protein level). Expressed in the hair follicle during morphogenesis and the hair cycle (at protein level). In embryonic brain, strong expression in the olfactory bulb, anterior olfactory nucleus, neocortex, piriform cortex, glial wedge, midline zipper glia, indusium griseum and the area surrounding the anterior commissure (AC) but not on AC axons (at protein level). In the adult eye, expressed in retinal layers, lens epithelium, and ciliary body where it is expressed predominantly in the inner non-pigmented layer. Expressed in almost all brain regions in the embryo, in the cortex and the lateral ventricle at P0 and is restricted to the subventricular zone and lateral nucleus of the amygdala in adults. Prominent expression in hippocampal regions from early postnatal stages until postnatal day 15 and gradually declines at later stages. Expressed in almost all bone regions in the femurs of juveniles. In the inner ear, accumulates in nonprosensory regions during early embryonic stages and in both nonprosensory and prosensory regions in late embryonic stages. In the adult ear, expressed in the organ of Corti, spiral ganglion cells, and the stria vascularis. Highly expressed in the liver where it is detected primarily in hepatocytes but not in non-parenchymal cells.

It localises to the secreted. Its function is as follows. Contributes to various developmental events and other processes such as wound healing and cholesterol homeostasis through its interactions with multiple signaling pathways. Wnt signaling inhibitor which competes with WNT2B for binding to Wnt receptor FZD4 and represses WNT2B-dependent development of the peripheral eye. Plays a role in regulating the hair cycle by controlling TGFB1 signaling. Required for the development of the anterior commissure in the brain by inhibiting neurite outgrowth. Essential for terminal differentiation of hippocampal neural stem cells. Plays a role in regulating bone elongation and bone mass by modulating growth plate chondrocyte function and overall body size. Required for development of the inner ear through its involvement in stereocilia formation in inner hair cells. Facilitates wound healing by inhibiting secretion of TGFB1 from macrophages which prevents myofibroblast differentiation, maintaining inflammatory cell quiescence. Plays a role in cholesterol homeostasis by reducing circulating high-density lipoprotein cholesterol, lowering cholesterol efflux capacity and decreasing cholesterol-to-bile acid conversion in the liver. In one study, shown to negatively regulate sympathetic innervation in brown fat, leading to reduced energy expenditure. In another study, shown not to affect brown fat thermogenic capacity, body weight gain or glucose homeostasis. This is Tsukushi from Mus musculus (Mouse).